Consider the following 959-residue polypeptide: Isoleucine--tRNA ligase (959 aa).

The short motif at 60–70 (PYANGSLHMGH) is the 'HIGH' region element. Position 569 (Glu-569) interacts with L-isoleucyl-5'-AMP. The short motif at 610-614 (KMSKS) is the 'KMSKS' region element. An ATP-binding site is contributed by Lys-613. 4 residues coordinate Zn(2+): Cys-928, Cys-931, Cys-948, and Cys-951.

The protein belongs to the class-I aminoacyl-tRNA synthetase family. IleS type 1 subfamily. In terms of assembly, monomer. It depends on Zn(2+) as a cofactor.

Its subcellular location is the cytoplasm. The enzyme catalyses tRNA(Ile) + L-isoleucine + ATP = L-isoleucyl-tRNA(Ile) + AMP + diphosphate. Catalyzes the attachment of isoleucine to tRNA(Ile). As IleRS can inadvertently accommodate and process structurally similar amino acids such as valine, to avoid such errors it has two additional distinct tRNA(Ile)-dependent editing activities. One activity is designated as 'pretransfer' editing and involves the hydrolysis of activated Val-AMP. The other activity is designated 'posttransfer' editing and involves deacylation of mischarged Val-tRNA(Ile). The sequence is that of Isoleucine--tRNA ligase from Crocosphaera subtropica (strain ATCC 51142 / BH68) (Cyanothece sp. (strain ATCC 51142)).